Consider the following 997-residue polypeptide: Autophagy-related protein 9 (997 aa).

Residues 1 to 318 (MERDEYQLPN…DVYNYYLGNG (318 aa)) lie on the Cytoplasmic side of the membrane. A Phosphoserine; by ATG1 modification is found at serine 19. Polar residues predominate over residues 29–39 (VNPSLNSQEMS). The tract at residues 29-88 (VNPSLNSQEMSNFPLPDIERGSSLLHSTNDSREDVDENDLRVPESDQGTSTEEEDEVDEE) is disordered. Residues 79–88 (TEEEDEVDEE) show a composition bias toward acidic residues. Residues lysine 113 and lysine 121 each participate in a glycyl lysine isopeptide (Lys-Gly) (interchain with G-Cter in ubiquitin) cross-link. Serine 122 bears the Phosphoserine mark. Disordered stretches follow at residues 128–159 (VEGSTDDSVPKVGQLSSEEEEDNEFINNDGFD) and 213–235 (IHHDKDKSANNGPRNINGNQKHG). A Glycyl lysine isopeptide (Lys-Gly) (interchain with G-Cter in ubiquitin) cross-link involves residue lysine 138. 2 positions are modified to phosphoserine: serine 143 and serine 144. The segment covering 144-159 (SEEEEDNEFINNDGFD) has biased composition (acidic residues). The span at 221–233 (ANNGPRNINGNQK) shows a compositional bias: polar residues. A helical transmembrane segment spans residues 319 to 339 (FYCIILEKILNICTLLFVVFV). Residues 340–376 (STYMGHCVDYSKLPTSHRVSDIIIDKCYSNSITGFTK) lie on the Lumenal side of the membrane. A helical membrane pass occupies residues 377–397 (FFLWMFYFFVILKIVQLYFDV). At 398 to 538 (QKLSELQNFY…EELQKRFMLA (141 aa)) the chain is on the cytoplasmic side. An intramembrane segment occupies 539-559 (GFLNIILAPFLVTYFVLLYFF). At 560–620 (RYFNEYKTSP…DQFPKEKTNL (61 aa)) the chain is on the cytoplasmic side. A helical transmembrane segment spans residues 621–641 (FLKFVSFICGSFVAILAFLTV). The Lumenal segment spans residues 642–656 (FDPENFLNFEITSDR). A Phosphoserine; by ATG1 modification is found at serine 657. The helical transmembrane segment at 657–677 (SVIFYITILGAIWSVSRNTIT) threads the bilayer. Residues 678–723 (QEYHVFDPEETLKELYEYTHYLPKEWEGRYHKEEIKLEFCKLYNLR) lie on the Cytoplasmic side of the membrane. Lysine 701 participates in a covalent cross-link: Glycyl lysine isopeptide (Lys-Gly) (interchain with G-Cter in ubiquitin). The stretch at 724–744 (IVILLRELTSLMITPFVLWFS) is an intramembrane region. Residues 745 to 997 (LPSSAGRIVD…EYYKKSDVGR (253 aa)) lie on the Cytoplasmic side of the membrane. A phosphoserine mark is found at serine 787 and serine 792. Threonine 794 carries the phosphothreonine modification. At serine 802 the chain carries Phosphoserine; by ATG1. At threonine 804 the chain carries Phosphothreonine; by ATG1. Phosphoserine; by ATG1 occurs at positions 831 and 842. Serine 864 bears the Phosphoserine mark. A phosphoserine; by ATG1 mark is found at serine 948 and serine 969.

It belongs to the ATG9 family. In terms of assembly, homotrimer; forms a homotrimer with a central pore that forms a path between the two membrane leaflets. Interacts with ATG23 and ATG27 to form a cycling complex for trafficking to the PAS. Interacts (via N-terminus) with ATG11, required for recruitment of ATG9 to the PAS for the Cvt pathway during nutrient-rich conditions. Interacts (via N-terminus) with ATG17; required for recruitment to the PAS during autophagy and starved conditions. Interacts with ATG2 and ATG18; required for the retrieval of ATG9 from the PAS to the cytoplasmic pool. Interacts with ATG41. Interacts with the conserved oligomeric Golgi (COG) complex subunits COG3 and COG4. Interacts with TRS85. In terms of processing, phosphorylated by ATG1; phosphorylation is required for autophagy and cytoplasm to vacuole transport (Cvt) vesicle formation. Phosphorylation by ATG1 regulates ATG18 interaction and preautophagosome elongation. Phosphorylation at Ser-122 is required for selective autophagy by regulating anterograde trafficking and interaction with ATG23 and ATG27. Phosphorylation at Ser-122 prevents ubiquitination by the SCF(MET30) complex. Post-translationally, ubiquitinated by the SCF(MET30) complex in normal conditions, leading to its degradation by the proteasome, thereby preventing inappropriate induction of autophagy. Ubiquitination by the SCF(MET30) complex is prevented by phosphorylation at Ser-122.

Its subcellular location is the preautophagosomal structure membrane. It is found in the cytoplasmic vesicle membrane. It localises to the golgi apparatus membrane. The protein resides in the endoplasmic reticulum membrane. The protein localises to the mitochondrion membrane. It carries out the reaction a 1,2-diacyl-sn-glycero-3-phosphocholine(in) = a 1,2-diacyl-sn-glycero-3-phosphocholine(out). It catalyses the reaction a 1,2-diacyl-sn-glycero-3-phospho-L-serine(in) = a 1,2-diacyl-sn-glycero-3-phospho-L-serine(out). The catalysed reaction is a 1,2-diacyl-sn-glycero-3-phosphoethanolamine(in) = a 1,2-diacyl-sn-glycero-3-phosphoethanolamine(out). The enzyme catalyses a 1,2-diacyl-sn-glycero-3-phospho-(1D-myo-inositol-3-phosphate)(in) = a 1,2-diacyl-sn-glycero-3-phospho-(1D-myo-inositol-3-phosphate)(out). Phospholipid scramblase involved in autophagy and cytoplasm to vacuole transport (Cvt) vesicle formation. Cycles between the preautophagosomal structure/phagophore assembly site (PAS) and the cytoplasmic vesicle pool and supplies membrane for the growing autophagosome. Lipid scramblase activity plays a key role in preautophagosomal structure/phagophore assembly by distributing the phospholipids that arrive through ATG2 from the cytoplasmic to the luminal leaflet of the bilayer, thereby driving autophagosomal membrane expansion. Required for mitophagy. Also involved in endoplasmic reticulum-specific autophagic process and is essential for the survival of cells subjected to severe ER stress. Recruits vesicle-tethering proteins TRS85 and YPT1 to the autophagosome formation site. Also recruits ATG23 and ATG8 to the PAS. The chain is Autophagy-related protein 9 from Saccharomyces cerevisiae (strain ATCC 204508 / S288c) (Baker's yeast).